The sequence spans 346 residues: Aspartate-semialdehyde dehydrogenase (346 aa).

Residues 13–16 (TGAV) and 41–42 (RS) contribute to the NADP(+) site. At S98 the chain carries Phosphoserine. R101 provides a ligand contact to phosphate. C130 functions as the Acyl-thioester intermediate in the catalytic mechanism. Y146 is modified (phosphotyrosine). Q157 provides a ligand contact to substrate. Residue 160-161 (SG) coordinates NADP(+). Residue K221 participates in phosphate binding. R243 contacts substrate. H250 functions as the Proton acceptor in the catalytic mechanism. Residue N324 coordinates NADP(+).

It belongs to the aspartate-semialdehyde dehydrogenase family. In terms of assembly, homodimer.

It catalyses the reaction L-aspartate 4-semialdehyde + phosphate + NADP(+) = 4-phospho-L-aspartate + NADPH + H(+). It participates in amino-acid biosynthesis; L-lysine biosynthesis via DAP pathway; (S)-tetrahydrodipicolinate from L-aspartate: step 2/4. Its pathway is amino-acid biosynthesis; L-methionine biosynthesis via de novo pathway; L-homoserine from L-aspartate: step 2/3. It functions in the pathway amino-acid biosynthesis; L-threonine biosynthesis; L-threonine from L-aspartate: step 2/5. Its function is as follows. Catalyzes the NADPH-dependent formation of L-aspartate-semialdehyde (L-ASA) by the reductive dephosphorylation of L-aspartyl-4-phosphate. This chain is Aspartate-semialdehyde dehydrogenase, found in Bacillus subtilis (strain 168).